We begin with the raw amino-acid sequence, 231 residues long: Octanoyltransferase (231 aa).

In terms of domain architecture, BPL/LPL catalytic spans 49 to 224 (ADTPDEIWLL…ALQRLLPPVY (176 aa)). Residues 88 to 95 (RGGQITYH), 155 to 157 (ALG), and 168 to 170 (GLA) each bind substrate. Cysteine 186 functions as the Acyl-thioester intermediate in the catalytic mechanism.

This sequence belongs to the LipB family.

The protein localises to the cytoplasm. The catalysed reaction is octanoyl-[ACP] + L-lysyl-[protein] = N(6)-octanoyl-L-lysyl-[protein] + holo-[ACP] + H(+). It functions in the pathway protein modification; protein lipoylation via endogenous pathway; protein N(6)-(lipoyl)lysine from octanoyl-[acyl-carrier-protein]: step 1/2. In terms of biological role, catalyzes the transfer of endogenously produced octanoic acid from octanoyl-acyl-carrier-protein onto the lipoyl domains of lipoate-dependent enzymes. Lipoyl-ACP can also act as a substrate although octanoyl-ACP is likely to be the physiological substrate. The sequence is that of Octanoyltransferase from Aromatoleum aromaticum (strain DSM 19018 / LMG 30748 / EbN1) (Azoarcus sp. (strain EbN1)).